Reading from the N-terminus, the 256-residue chain is Nuclear shuttle protein (256 aa).

A Bipartite nuclear localization signal motif is present at residues 21–42 (NSLIRQQSLFKRNVSKRRPFQT). A Nuclear localization signal motif is present at residues 81-96 (DIAKSLPNRTRSYIKL). The interaction with Arabidopsis thaliana NSI protein stretch occupies residues 150 to 187 (ELFGARIHSHGNLAIVPSLKDRFYIRHVLKRVISVEKD).

This sequence belongs to the begomovirus nuclear shuttle protein family. Binds to single-stranded and double-stranded viral DNA. Interacts with the host nuclear shuttle interacting (NSI) protein. This interaction may allow NSP to recruit NSI monomers to the viral genome and thus regulate nuclear export of viral genome by NSP.

The protein resides in the host nucleus. It is found in the host cytoplasm. It localises to the host cell membrane. Its function is as follows. Binds to the genomic viral ssDNA, shuttles it into and out of the cell nucleus. Begomoviruses use 2 proteins to transport their DNA from cell to cell. The nuclear shuttle protein (NSP) shuttles it between nucleus and cytoplasm and the movement protein (MP) probably transports the DNA-NSP complex to the cell periphery and facilitates movement across the cell wall. In Potato yellow mosaic virus (isolate Venezuela) (PYMV), this protein is Nuclear shuttle protein.